We begin with the raw amino-acid sequence, 343 residues long: Ferrochelatase (343 aa).

His-191 and Glu-270 together coordinate Fe cation.

This sequence belongs to the ferrochelatase family.

The protein localises to the cytoplasm. It carries out the reaction heme b + 2 H(+) = protoporphyrin IX + Fe(2+). Its pathway is porphyrin-containing compound metabolism; protoheme biosynthesis; protoheme from protoporphyrin-IX: step 1/1. Its function is as follows. Catalyzes the ferrous insertion into protoporphyrin IX. The sequence is that of Ferrochelatase from Phenylobacterium zucineum (strain HLK1).